Reading from the N-terminus, the 571-residue chain is Urease subunit alpha (571 aa).

One can recognise a Urease domain in the interval 129-571; that stretch reads GGIDSHIHFI…LPMAQRYFLF (443 aa). Residues His-134, His-136, and Lys-217 each coordinate Ni(2+). Lys-217 carries the N6-carboxylysine modification. His-219 is a binding site for substrate. Residues His-246 and His-272 each coordinate Ni(2+). His-320 (proton donor) is an active-site residue. Asp-360 contributes to the Ni(2+) binding site.

This sequence belongs to the metallo-dependent hydrolases superfamily. Urease alpha subunit family. As to quaternary structure, heterotrimer of UreA (gamma), UreB (beta) and UreC (alpha) subunits. Three heterotrimers associate to form the active enzyme. Ni cation serves as cofactor. Carboxylation allows a single lysine to coordinate two nickel ions.

It is found in the cytoplasm. The catalysed reaction is urea + 2 H2O + H(+) = hydrogencarbonate + 2 NH4(+). The protein operates within nitrogen metabolism; urea degradation; CO(2) and NH(3) from urea (urease route): step 1/1. The chain is Urease subunit alpha from Cupriavidus necator (strain ATCC 17699 / DSM 428 / KCTC 22496 / NCIMB 10442 / H16 / Stanier 337) (Ralstonia eutropha).